We begin with the raw amino-acid sequence, 202 residues long: Na(+)-translocating NADH-quinone reductase subunit E (202 aa).

6 consecutive transmembrane segments (helical) span residues Ser-11–Ile-31, Ile-35–Val-55, Phe-81–Val-101, Gly-114–Val-134, Val-144–Ile-164, and Ile-182–Leu-202.

It belongs to the NqrDE/RnfAE family. As to quaternary structure, composed of six subunits; NqrA, NqrB, NqrC, NqrD, NqrE and NqrF.

The protein resides in the cell inner membrane. It carries out the reaction a ubiquinone + n Na(+)(in) + NADH + H(+) = a ubiquinol + n Na(+)(out) + NAD(+). Its function is as follows. NQR complex catalyzes the reduction of ubiquinone-1 to ubiquinol by two successive reactions, coupled with the transport of Na(+) ions from the cytoplasm to the periplasm. NqrA to NqrE are probably involved in the second step, the conversion of ubisemiquinone to ubiquinol. The protein is Na(+)-translocating NADH-quinone reductase subunit E of Saccharophagus degradans (strain 2-40 / ATCC 43961 / DSM 17024).